The following is a 170-amino-acid chain: Small ribosomal subunit protein bS18c (170 aa).

The tract at residues 1 to 61 is disordered; it reads MYTSKQPFLK…RRPRIGPGDR (61 aa). The span at 13–26 shows a compositional bias: polar residues; sequence QPFSKSKQTFNKSK. Over residues 27–55 the composition is skewed to basic residues; that stretch reads QPFRKSKQTFRKFKQPFRKSKQPFRRRPR.

This sequence belongs to the bacterial ribosomal protein bS18 family. As to quaternary structure, part of the 30S ribosomal subunit.

The protein localises to the plastid. The protein resides in the chloroplast. The protein is Small ribosomal subunit protein bS18c of Hordeum vulgare (Barley).